The primary structure comprises 242 residues: MFARSFSNASRTIARRSLSTRSGPAPSSLWSSRNAVIAGTTLAITALAVTSERRKVFNESAQKATSPRDSIIAQDSLKENVHKKSVRQDEFSGESTKPEASTSSDSVEKAADDAAQILEEKEAEASEPSQGAYNPETGEINWDCPCLGGMATGPCGEQFKAAFSCFVYSEAEPKGVDCVELFKVMQDCFREHPEIYGEVDTLGLVLMFYAEIDDDEAPPQEGTMEEKVEAAKEETAAPAAAP.

The N-terminal 18 residues, 1–18, are a transit peptide targeting the mitochondrion; sequence MFARSFSNASRTIARRSL. A compositionally biased stretch (polar residues) spans 1–22; sequence MFARSFSNASRTIARRSLSTRS. Residues 1–30 form a disordered region; the sequence is MFARSFSNASRTIARRSLSTRSGPAPSSLW. The Mitochondrial matrix portion of the chain corresponds to 19–34; sequence STRSGPAPSSLWSSRN. The helical; Signal-anchor for type II membrane protein transmembrane segment at 35 to 51 threads the bilayer; sequence AVIAGTTLAITALAVTS. At 52 to 242 the chain is on the mitochondrial intermembrane side; sequence ERRKVFNESA…EETAAPAAAP (191 aa). The segment at 58-111 is disordered; sequence NESAQKATSPRDSIIAQDSLKENVHKKSVRQDEFSGESTKPEASTSSDSVEKAA. A compositionally biased stretch (polar residues) spans 59-68; sequence ESAQKATSPR. A compositionally biased stretch (basic and acidic residues) spans 76–90; the sequence is SLKENVHKKSVRQDE. The segment covering 93-105 has biased composition (polar residues); it reads GESTKPEASTSSD. 3 cysteine pairs are disulfide-bonded: cysteine 144/cysteine 146, cysteine 155/cysteine 188, and cysteine 165/cysteine 178. The CHCH domain maps to 152–196; it reads TGPCGEQFKAAFSCFVYSEAEPKGVDCVELFKVMQDCFREHPEIY. 2 consecutive short sequence motifs (cx9C motif) follow at residues 155–165 and 178–188; these read CGEQFKAAFSC and CVELFKVMQDC. The interval 215 to 242 is disordered; the sequence is DEAPPQEGTMEEKVEAAKEETAAPAAAP. Positions 224-235 are enriched in basic and acidic residues; it reads MEEKVEAAKEET.

Monomer. It depends on Cu(2+) as a cofactor. Zn(2+) is required as a cofactor.

The protein resides in the mitochondrion inner membrane. Functionally, required for the import and folding of small cysteine-containing proteins (small Tim) in the mitochondrial intermembrane space (IMS). Forms a redox cycle with ERV1 that involves a disulfide relay system. Precursor proteins to be imported into the IMS are translocated in their reduced form into the mitochondria. The oxidized form of MIA40 forms a transient intermolecular disulfide bridge with the reduced precursor protein, resulting in oxidation of the precursor protein that now contains an intramolecular disulfide bond and is able to undergo folding in the IMS. The sequence is that of Mitochondrial intermembrane space import and assembly protein 40 (MIA40) from Cryptococcus neoformans var. neoformans serotype D (strain B-3501A) (Filobasidiella neoformans).